We begin with the raw amino-acid sequence, 583 residues long: Protein NRT1/ PTR FAMILY 5.1 (583 aa).

A helical membrane pass occupies residues 74–94; it reads WSGAVWITPIAGAYIADSYIG. Thr-98 carries the post-translational modification Phosphothreonine. The next 10 helical transmembrane spans lie at 99–119, 134–154, 182–202, 210–230, 320–340, 361–381, 405–425, 446–466, 485–505, and 529–549; these read FTAS…AVTV, ASSL…IGAG, FFNW…LGLV, WGLG…VFYI, VLGL…WAQV, IPAA…VPMY, LGVG…VEVK, IFWL…NAIG, TFFT…VTMI, and YYYG…VWAA.

The protein belongs to the major facilitator superfamily. Proton-dependent oligopeptide transporter (POT/PTR) (TC 2.A.17) family. As to expression, expressed in flowers. Detected in stems, leaves and siliques.

It localises to the membrane. The protein is Protein NRT1/ PTR FAMILY 5.1 (NPF5.1) of Arabidopsis thaliana (Mouse-ear cress).